Reading from the N-terminus, the 352-residue chain is Small ribosomal subunit biogenesis GTPase RsgA (352 aa).

The segment covering 1 to 21 (MKKNKLSKNQHRRIQAHHQYR) has biased composition (basic residues). The segment at 1-38 (MKKNKLSKNQHRRIQAHHQYRLHPTSLTDDKNNQLDDA) is disordered. The CP-type G domain occupies 116–278 (FYDGIKPMAA…LIDSPGIREF (163 aa)). GTP is bound by residues 164-167 (NKID) and 218-226 (GQSGVGKSS). Residues Cys-302, Cys-307, His-309, and Cys-315 each coordinate Zn(2+).

This sequence belongs to the TRAFAC class YlqF/YawG GTPase family. RsgA subfamily. As to quaternary structure, monomer. Associates with 30S ribosomal subunit, binds 16S rRNA. Zn(2+) serves as cofactor.

The protein localises to the cytoplasm. In terms of biological role, one of several proteins that assist in the late maturation steps of the functional core of the 30S ribosomal subunit. Helps release RbfA from mature subunits. May play a role in the assembly of ribosomal proteins into the subunit. Circularly permuted GTPase that catalyzes slow GTP hydrolysis, GTPase activity is stimulated by the 30S ribosomal subunit. This chain is Small ribosomal subunit biogenesis GTPase RsgA, found in Hamiltonella defensa subsp. Acyrthosiphon pisum (strain 5AT).